A 265-amino-acid polypeptide reads, in one-letter code: Thymidine kinase 2, mitochondrial (265 aa).

A mitochondrion-targeting transit peptide spans 1–33 (MLLRPLRGWAALALRCFEPGSPGSPASGPGSRR). Over residues 21–31 (SPGSPASGPGS) the composition is skewed to low complexity. Positions 21 to 45 (SPGSPASGPGSRRVQRGAWPSDKER) are disordered. 57–65 (GNIASGKTT) provides a ligand contact to ATP. Residue glutamate 133 is the Proton acceptor of the active site.

Belongs to the DCK/DGK family. Homodimer.

It localises to the mitochondrion. It catalyses the reaction thymidine + ATP = dTMP + ADP + H(+). It carries out the reaction 2'-deoxycytidine + ATP = dCMP + ADP + H(+). The enzyme catalyses 2'-deoxyuridine + ATP = dUMP + ADP + H(+). Phosphorylates thymidine, deoxycytidine, and deoxyuridine in the mitochondrial matrix. In non-replicating cells, where cytosolic dNTP synthesis is down-regulated, mtDNA synthesis depends solely on TK2 and DGUOK. The chain is Thymidine kinase 2, mitochondrial (TK2) from Macaca fascicularis (Crab-eating macaque).